A 324-amino-acid polypeptide reads, in one-letter code: Polyketide biosynthesis acyltransferase homolog BaeD (324 aa).

The active site involves Ser99.

The protein localises to the cytoplasm. The protein operates within antibiotic biosynthesis; bacillaene biosynthesis. Its function is as follows. Probably involved in some intermediate steps for the synthesis of the antibiotic polyketide bacillaene which is involved in secondary metabolism. This is Polyketide biosynthesis acyltransferase homolog BaeD (baeD) from Bacillus velezensis (strain DSM 23117 / BGSC 10A6 / LMG 26770 / FZB42) (Bacillus amyloliquefaciens subsp. plantarum).